A 101-amino-acid chain; its full sequence is 2-amino-4-ketopentanoate thiolase alpha subunit (101 aa).

It belongs to the OrtA family. As to quaternary structure, heterodimer with OrtB.

It catalyses the reaction D-alanine + acetyl-CoA = (2R)-2-amino-4-oxopentanoate + CoA. With respect to regulation, completely inhibited by p-chloromercuribenzoate (p-ClHgBzO) and acetyl-CoA, and partially inhibited by N-ethylmaleimide. Involved in the ornithine fermentation pathway. Catalyzes the thiolytic cleavage of 2-amino-4-ketopentanoate (AKP) with coenzyme A (CoA) to form acetyl-CoA and alanine. It is strictly specific for AKP. This Acetoanaerobium sticklandii (strain ATCC 12662 / DSM 519 / JCM 1433 / CCUG 9281 / NCIMB 10654 / HF) (Clostridium sticklandii) protein is 2-amino-4-ketopentanoate thiolase alpha subunit.